The sequence spans 1389 residues: uncharacterized protein (1389 aa).

Residues 43 to 94 (STIAQRVSQLENEVAEINVALAEHVNELNSQEKRIDKLEKTVKKKKSNCSDD) adopt a coiled-coil conformation. The segment at 294–353 (HKNRRSKSDNSDLSEYSSSNSDDSECTDSDGSSCSTDGSPDCTESENTESHRSHGKKKHR) is disordered. 2 stretches are compositionally biased toward low complexity: residues 304-314 (SDLSEYSSSNS) and 322-335 (SDGSSCSTDGSPDC). 3 WD repeats span residues 867-907 (TFTD…VKHI), 1017-1056 (GYNEGLDIKYSPDQTIVVSGYYNTNPLIIYDGPDGLTPSG), and 1115-1156 (GISN…ILST).

The protein resides in the virion. This is an uncharacterized protein from Acanthamoeba polyphaga (Amoeba).